Reading from the N-terminus, the 288-residue chain is MALFKKKNYIRINPNRAHANDASKKPSVPDNMWAKCPSCKRTLYTKEMGAEKICPHCGYSFRIGAWERLAITVDEKSFHNWDSELVTKDPLNFPGYLEKIEKMQEKTGLDEAVLTGEATIEGQAVAIGIMDANFIMGSMGTIVGEKITRLFERATEKHLPVVIFTASGGARMQEGIFSLMQMAKISAALQRHNKAGLLYLTVLTDPTTGGVTASFAMDGDIILAEPQSLIGFAGRRVIEQTIRQELPDDFQKAEFLLEHGFVDQIVPRNLLRQRLSDLLRLHSLEGWR.

A CoA carboxyltransferase N-terminal domain is found at methionine 32 to arginine 288. Zn(2+) contacts are provided by cysteine 36, cysteine 39, cysteine 54, and cysteine 57. The segment at cysteine 36–cysteine 57 adopts a C4-type zinc-finger fold.

It belongs to the AccD/PCCB family. Acetyl-CoA carboxylase is a heterohexamer composed of biotin carboxyl carrier protein (AccB), biotin carboxylase (AccC) and two subunits each of ACCase subunit alpha (AccA) and ACCase subunit beta (AccD). Requires Zn(2+) as cofactor.

The protein resides in the cytoplasm. It catalyses the reaction N(6)-carboxybiotinyl-L-lysyl-[protein] + acetyl-CoA = N(6)-biotinyl-L-lysyl-[protein] + malonyl-CoA. It functions in the pathway lipid metabolism; malonyl-CoA biosynthesis; malonyl-CoA from acetyl-CoA: step 1/1. In terms of biological role, component of the acetyl coenzyme A carboxylase (ACC) complex. Biotin carboxylase (BC) catalyzes the carboxylation of biotin on its carrier protein (BCCP) and then the CO(2) group is transferred by the transcarboxylase to acetyl-CoA to form malonyl-CoA. This is Acetyl-coenzyme A carboxylase carboxyl transferase subunit beta from Enterococcus faecalis (strain ATCC 700802 / V583).